The primary structure comprises 459 residues: UDP-N-acetylmuramoylalanine--D-glutamate ligase (459 aa).

119 to 125 contacts ATP; it reads GTNGKTT.

The protein belongs to the MurCDEF family.

It localises to the cytoplasm. The catalysed reaction is UDP-N-acetyl-alpha-D-muramoyl-L-alanine + D-glutamate + ATP = UDP-N-acetyl-alpha-D-muramoyl-L-alanyl-D-glutamate + ADP + phosphate + H(+). It functions in the pathway cell wall biogenesis; peptidoglycan biosynthesis. Functionally, cell wall formation. Catalyzes the addition of glutamate to the nucleotide precursor UDP-N-acetylmuramoyl-L-alanine (UMA). The chain is UDP-N-acetylmuramoylalanine--D-glutamate ligase from Lactiplantibacillus plantarum (strain ATCC BAA-793 / NCIMB 8826 / WCFS1) (Lactobacillus plantarum).